The following is a 971-amino-acid chain: Zinc finger CCCH domain-containing protein 7A (971 aa).

TPR repeat units follow at residues 43-76 (VRNL…ADYA), 89-122 (EKLY…NASN), and 124-156 (KALY…VPQD). Thr-210 is modified (phosphothreonine). 2 consecutive C3H1-type zinc fingers follow at residues 634–656 (LCRH…HSLV) and 769–797 (PLQF…HSPE). The C2H2-type zinc finger occupies 857-881 (FHCWMCGKNCNSEKQWQGHISSEKH). The C3H1-type 3 zinc-finger motif lies at 906–928 (ICDRYMNGTCPEGNSCKFAHGNA). A coiled-coil region spans residues 924 to 952 (AHGNAELHEWEERRDALKMKLNKARKDHL).

The protein localises to the nucleus. Functionally, may be a specific regulator of miRNA biogenesis. Binds to microRNAs MIR7-1, MIR16-2 and MIR29A hairpins recognizing the 3'-ATA(A/T)-5' motif in the apical loop. The polypeptide is Zinc finger CCCH domain-containing protein 7A (ZC3H7A) (Homo sapiens (Human)).